Here is a 429-residue protein sequence, read N- to C-terminus: Histidine--tRNA ligase (429 aa).

Belongs to the class-II aminoacyl-tRNA synthetase family. In terms of assembly, homodimer.

The protein resides in the cytoplasm. The enzyme catalyses tRNA(His) + L-histidine + ATP = L-histidyl-tRNA(His) + AMP + diphosphate + H(+). This chain is Histidine--tRNA ligase, found in Desulfotalea psychrophila (strain LSv54 / DSM 12343).